The following is a 271-amino-acid chain: MHELLLFASVPAHQHHELLQQLAGLTAMQPRHRLERRLVFKAYRKPGLTNTRVGASQDLQGVELQRLNKMLNGGMFYTQVVGPVAKADFGGNPSSSGDPDVSMSGLEEKPSSSSSSYSYEDQPWKLEFRDIPEAGTRSAVTARLMASATLPKGDITAPMNAWGYSFVTEYVVEGDVFVLNDIVIFLHRVLLYPTGAQESHGPRRQLPAYQELSPLERTGSYVLQAAITVQDGGNQEMMRTASQHLFGLREQLKSAVRLEMADRLSLDTRAK.

The disordered stretch occupies residues 89–119 (FGGNPSSSGDPDVSMSGLEEKPSSSSSSYSY).

This sequence belongs to the Mediator complex subunit 18 family. In terms of assembly, component of the Mediator complex.

It is found in the nucleus. In terms of biological role, component of the Mediator complex, a coactivator involved in the regulated transcription of nearly all RNA polymerase II-dependent genes. Mediator functions as a bridge to convey information from gene-specific regulatory proteins to the basal RNA polymerase II transcription machinery. Mediator is recruited to promoters by direct interactions with regulatory proteins and serves as a scaffold for the assembly of a functional preinitiation complex with RNA polymerase II and the general transcription factors. The chain is Mediator of RNA polymerase II transcription subunit 18 (srb5) from Aspergillus niger (strain ATCC MYA-4892 / CBS 513.88 / FGSC A1513).